A 40-amino-acid chain; its full sequence is Dolichyl-diphosphooligosaccharide--protein glycosyltransferase subunit 4 (40 aa).

The Lumenal portion of the chain corresponds to 1 to 7; it reads MITDMQL. A helical membrane pass occupies residues 8 to 28; sequence AIFSNVLGVFLFLLVVAYHYI. Residues 29 to 40 lie on the Cytoplasmic side of the membrane; the sequence is NANTGKPSAKAK.

This sequence belongs to the OST4 family. As to quaternary structure, component of the oligosaccharyltransferase (OST) complex.

The protein resides in the endoplasmic reticulum membrane. Its function is as follows. Subunit of the oligosaccharyl transferase (OST) complex that catalyzes the initial transfer of a defined glycan (Glc(3)Man(9)GlcNAc(2) in eukaryotes) from the lipid carrier dolichol-pyrophosphate to an asparagine residue within an Asn-X-Ser/Thr consensus motif in nascent polypeptide chains, the first step in protein N-glycosylation. N-glycosylation occurs cotranslationally and the complex associates with the Sec61 complex at the channel-forming translocon complex that mediates protein translocation across the endoplasmic reticulum (ER). All subunits are required for a maximal enzyme activity. In Drosophila sechellia (Fruit fly), this protein is Dolichyl-diphosphooligosaccharide--protein glycosyltransferase subunit 4.